The chain runs to 96 residues: MAKYEILYIIRPNIEEEAKNALVARFDSILTDNGATVVESKDWEKRRLAYEIQDFREGLYHIVNVEANDDAALKEFDRLSKINADILRHMIVKLDA.

It belongs to the bacterial ribosomal protein bS6 family.

Binds together with bS18 to 16S ribosomal RNA. The polypeptide is Small ribosomal subunit protein bS6 (Streptococcus sanguinis (strain SK36)).